Here is a 185-residue protein sequence, read N- to C-terminus: Hypoxanthine/guanine phosphoribosyltransferase (185 aa).

It belongs to the purine/pyrimidine phosphoribosyltransferase family. Archaeal HPRT subfamily. As to quaternary structure, homodimer.

It is found in the cytoplasm. It catalyses the reaction IMP + diphosphate = hypoxanthine + 5-phospho-alpha-D-ribose 1-diphosphate. The catalysed reaction is GMP + diphosphate = guanine + 5-phospho-alpha-D-ribose 1-diphosphate. It participates in purine metabolism; IMP biosynthesis via salvage pathway; IMP from hypoxanthine: step 1/1. Functionally, catalyzes a salvage reaction resulting in the formation of IMP that is energically less costly than de novo synthesis. This Methanococcus maripaludis (strain C5 / ATCC BAA-1333) protein is Hypoxanthine/guanine phosphoribosyltransferase.